A 466-amino-acid polypeptide reads, in one-letter code: Ribulose bisphosphate carboxylase large chain (466 aa).

Position 5 is an N6,N6,N6-trimethyllysine (Lys-5). Substrate contacts are provided by Asn-114 and Thr-164. Lys-166 functions as the Proton acceptor in the catalytic mechanism. Lys-168 contributes to the substrate binding site. Mg(2+) is bound by residues Lys-192, Asp-194, and Glu-195. Lys-192 bears the N6-carboxylysine mark. His-285 serves as the catalytic Proton acceptor. The substrate site is built by Arg-286, His-318, and Ser-370.

This sequence belongs to the RuBisCO large chain family. Type I subfamily. As to quaternary structure, heterohexadecamer of 8 large chains and 8 small chains; disulfide-linked. The disulfide link is formed within the large subunit homodimers. It depends on Mg(2+) as a cofactor. The disulfide bond which can form in the large chain dimeric partners within the hexadecamer appears to be associated with oxidative stress and protein turnover.

It localises to the plastid. The protein resides in the chloroplast. The enzyme catalyses 2 (2R)-3-phosphoglycerate + 2 H(+) = D-ribulose 1,5-bisphosphate + CO2 + H2O. It carries out the reaction D-ribulose 1,5-bisphosphate + O2 = 2-phosphoglycolate + (2R)-3-phosphoglycerate + 2 H(+). In terms of biological role, ruBisCO catalyzes two reactions: the carboxylation of D-ribulose 1,5-bisphosphate, the primary event in carbon dioxide fixation, as well as the oxidative fragmentation of the pentose substrate in the photorespiration process. Both reactions occur simultaneously and in competition at the same active site. The polypeptide is Ribulose bisphosphate carboxylase large chain (Adenium obesum (Desert rose)).